The primary structure comprises 432 residues: Adenylosuccinate synthetase (432 aa).

GTP contacts are provided by residues 12–18 (GDEGKGK) and 40–42 (GHT). The active-site Proton acceptor is the D13. Mg(2+) contacts are provided by D13 and G40. Residues 13 to 16 (DEGK), 38 to 41 (NAGH), T132, R146, Q226, T241, and R305 each bind IMP. The active-site Proton donor is the H41. A substrate-binding site is contributed by 301-307 (TVTGRKR). GTP-binding positions include R307, 333-335 (KLD), and 415-417 (STS).

This sequence belongs to the adenylosuccinate synthetase family. As to quaternary structure, homodimer. The cofactor is Mg(2+).

It localises to the cytoplasm. The enzyme catalyses IMP + L-aspartate + GTP = N(6)-(1,2-dicarboxyethyl)-AMP + GDP + phosphate + 2 H(+). It participates in purine metabolism; AMP biosynthesis via de novo pathway; AMP from IMP: step 1/2. Its function is as follows. Plays an important role in the de novo pathway of purine nucleotide biosynthesis. Catalyzes the first committed step in the biosynthesis of AMP from IMP. The protein is Adenylosuccinate synthetase of Rhizobium etli (strain ATCC 51251 / DSM 11541 / JCM 21823 / NBRC 15573 / CFN 42).